We begin with the raw amino-acid sequence, 573 residues long: Protein FAM200A (573 aa).

Residues 1-51 (MTPESRDTTDLSPRGTQEMEGIVVVKVEEEDEEDHFQKQRNKVESSPQVLS) are disordered. Residues 1 to 513 (MTPESRDTTD…DEFPLLSRKS (513 aa)) lie on the Extracellular side of the membrane. The helical transmembrane segment at 514-533 (ISLLLPFTTTYLCELGFSIL) threads the bilayer. Residues 534–573 (TRLKTKKRNRLNSAPDMRVALSSCVPDWKELMNRQAHPSH) are Cytoplasmic-facing.

This sequence belongs to the FAM200 family.

Its subcellular location is the membrane. In Macaca fascicularis (Crab-eating macaque), this protein is Protein FAM200A (FAM200A).